Consider the following 412-residue polypeptide: Regulator of microtubule dynamics protein 2 (412 aa).

Residues 9 to 28 (LLLGIMAGTAGISLLVLWYH) form a helical membrane-spanning segment. Ser-51 is modified (phosphoserine). Residues 72–110 (QLQILEKLNELLTNVEELKEEIKFLKETIPKLEECIQDE) are a coiled coil. At Ser-121 the chain carries Phosphoserine. Residues 122–153 (PQHRARKKKTTTTTVQRPATSNSSEEAESEGG) form a disordered region. A Phosphothreonine modification is found at Thr-141. Tyr-154 bears the Phosphotyrosine mark. 2 positions are modified to phosphothreonine: Thr-156 and Thr-159.

Belongs to the RMDN family. Interacts with microtubules.

It is found in the membrane. Its subcellular location is the cytoplasm. It localises to the cytoskeleton. The protein localises to the spindle. The protein resides in the spindle pole. This chain is Regulator of microtubule dynamics protein 2 (Rmdn2), found in Rattus norvegicus (Rat).